Consider the following 574-residue polypeptide: MPPSSSITQEDKATIRKYIPKSTNKIIAAAVVKLYVAYPDPNKWNYTGLCGALVLSYDTTAKCCWFKLVDVVNNSGIIWDQELYQNMDYRQDRTFFHSFELDKCLAGFSFANETDAQKFYKKVLDKGCHPESIENPVLSFITRKGSSRHAPNNSNIQPPSAAPPVPGKENYNAVGSKSPNEPELLNSLDPSLIDSLMKMGISQDQIAENADFVKAYLNESAGTPTSTSAPPIPPSIPSSRPPERVPSLSAPAPPPIPPPSNGTVSSPPNSPPRPIAPVSMNPAINSTSKPPLPPPSSRVSAAALAANKKRPPPPPPPSRRNRGKPPIGNGSSNSSLPPPPPPPRSNAAGSIPLPPQGRSAPPPPPPRSAPSTGRQPPPLSSSRAVSNPPAPPPAIPGRSAPALPPLGNASRTSTPPVPTPPSLPPSAPPSLPPSAPPSLPMGAPAAPPLPPSAPIAPPLPAGMPAAPPLPPAAPAPPPAPAPAPAAPVASIAELPQQDGRANLMASIRASGGMDLLKSRKVSASPSVASTKTSNPPVEAPPSNNLMDALASALNQRKTKVAQSDEEDEDDDEWD.

The region spanning 19–130 is the WH1 domain; that stretch reads IPKSTNKIIA…KKVLDKGCHP (112 aa). Disordered regions lie at residues 144–186, 221–494, and 517–574; these read KGSS…ELLN, AGTP…IAEL, and KSRK…DEWD. Residues 149-158 show a composition bias toward polar residues; that stretch reads HAPNNSNIQP. Pro residues-rich tracts occupy residues 230–240 and 251–260; these read PPIPPSIPSSR and PAPPPIPPPS. 2 stretches are compositionally biased toward low complexity: residues 297–306 and 324–335; these read SRVSAAALAA and KPPIGNGSSNSS. A compositionally biased stretch (pro residues) spans 352–368; it reads PLPPQGRSAPPPPPPRS. Serine 386 carries the phosphoserine modification. Residues 415–485 show a composition bias toward pro residues; the sequence is PPVPTPPSLP…PPPAPAPAPA (71 aa). The WH2 domain occupies 499-518; that stretch reads GRANLMASIRASGGMDLLKS. The segment covering 521-545 has biased composition (polar residues); the sequence is VSASPSVASTKTSNPPVEAPPSNNL. A compositionally biased stretch (acidic residues) spans 563 to 574; sequence SDEEDEDDDEWD.

In terms of assembly, interacts with vrp1.

The protein localises to the cytoplasm. It localises to the cytoskeleton. Has a role in regulating actin assembly, so regulating polarized growth. The polypeptide is Actin-binding protein wsp1 (wsp1) (Schizosaccharomyces pombe (strain 972 / ATCC 24843) (Fission yeast)).